We begin with the raw amino-acid sequence, 409 residues long: Astacin-like metalloendopeptidase (409 aa).

The N-terminal stretch at 1–19 (MDLKMLLIFTAFLLPAVLG) is a signal peptide. The propeptide occupies 20–86 (FPIQDNYENS…EGDIVPRRSR (67 aa)). Residues 30-42 (TATSESTQVTTEE) are compositionally biased toward low complexity. The tract at residues 30–55 (TATSESTQVTTEESIYDSPSPTETDS) is disordered. The Peptidase M12A domain maps to 87–285 (SAFNCRNCYW…AKINKLYNCS (199 aa)). 5 cysteine pairs are disulfide-bonded: cysteine 91/cysteine 94, cysteine 134/cysteine 284, cysteine 155/cysteine 175, cysteine 287/cysteine 313, and cysteine 339/cysteine 362. Histidine 183 serves as a coordination point for Zn(2+). The active site involves glutamate 184. 2 residues coordinate Zn(2+): histidine 187 and histidine 193. The CUB domain maps to 287–399 (CSTIIDAAFG…SGFQATFTSA (113 aa)).

The cofactor is Zn(2+).

Its subcellular location is the cytoplasm. It localises to the cell membrane. It is found in the cytoplasmic vesicle. The protein resides in the secretory vesicle. The protein localises to the cortical granule. In terms of biological role, probable oocyte-specific oolemmal receptor involved in sperm and egg adhesion and fertilization. Protease which may play a role in the breaking down of the vitelline membrane (days 0-5) and possibly, in the digestion of the egg white (days 9-12). This is Astacin-like metalloendopeptidase from Coturnix japonica (Japanese quail).